The sequence spans 208 residues: MSRFIGSTFKKSRRFGFSILETGKEFSKGKKRITTPGQHGKERAKVKVSEYGQQLQEKQKVKFMYGLSERQFRNTFAKAKKMQGILGTNFLVLLESRLDNIVYRLGFSATRQGARQLVNHGHILVNGKKVDIPSYLLSVGDLVEVKASMKKNEKVLEALQNNEATLEFVKVNKNEVKGEFVRLPERNELNSEISESLIVEWYNRLIKK.

Residues Ser-96–Leu-159 enclose the S4 RNA-binding domain.

Belongs to the universal ribosomal protein uS4 family. As to quaternary structure, part of the 30S ribosomal subunit. Contacts protein S5. The interaction surface between S4 and S5 is involved in control of translational fidelity.

Functionally, one of the primary rRNA binding proteins, it binds directly to 16S rRNA where it nucleates assembly of the body of the 30S subunit. Its function is as follows. With S5 and S12 plays an important role in translational accuracy. The polypeptide is Small ribosomal subunit protein uS4 (Mycoplasma capricolum subsp. capricolum (strain California kid / ATCC 27343 / NCTC 10154)).